Consider the following 36-residue polypeptide: Cytochrome b6-f complex subunit 7 (36 aa).

Residues 9–29 form a helical membrane-spanning segment; the sequence is NGAFIMIGLTLLGLAWGFVII.

The protein belongs to the PetM family. In terms of assembly, the 4 large subunits of the cytochrome b6-f complex are cytochrome b6, subunit IV (17 kDa polypeptide, PetD), cytochrome f and the Rieske protein, while the 4 small subunits are PetG, PetL, PetM and PetN. The complex functions as a dimer.

It localises to the cellular thylakoid membrane. In terms of biological role, component of the cytochrome b6-f complex, which mediates electron transfer between photosystem II (PSII) and photosystem I (PSI), cyclic electron flow around PSI, and state transitions. In Synechocystis sp. (strain ATCC 27184 / PCC 6803 / Kazusa), this protein is Cytochrome b6-f complex subunit 7.